The following is a 217-amino-acid chain: Proteasome subunit beta type-9 (217 aa).

A propeptide spans 1–18 (MLEESSEPGWLSEEVKTG) (removed in mature form). The active-site Nucleophile is the Thr19.

The protein belongs to the peptidase T1B family. In terms of assembly, the 26S proteasome consists of a 20S proteasome core and two 19S regulatory subunits. The 20S proteasome core is composed of 28 subunits that are arranged in four stacked rings, resulting in a barrel-shaped structure. The two end rings are each formed by seven alpha subunits, and the two central rings are each formed by seven beta subunits. The catalytic chamber with the active sites is on the inside of the barrel. Component of the immunoproteasome, where it displaces the equivalent housekeeping subunit PSMB6. Autocleaved. The resulting N-terminal Thr residue of the mature subunit is responsible for the nucleophile proteolytic activity.

It localises to the cytoplasm. Its subcellular location is the nucleus. It carries out the reaction Cleavage of peptide bonds with very broad specificity.. Functionally, the proteasome is a multicatalytic proteinase complex which is characterized by its ability to cleave peptides with Arg, Phe, Tyr, Leu, and Glu adjacent to the leaving group at neutral or slightly basic pH. The proteasome has an ATP-dependent proteolytic activity. This subunit is involved in antigen processing to generate class I binding peptides. In Salmo salar (Atlantic salmon), this protein is Proteasome subunit beta type-9 (psmb9-a).